The chain runs to 138 residues: MAGSVYNLPSQNPNPQSLFQIFVDRVPLSNLPATSDDSSRTAEDNERKRRRKVSNRESARRSRMRKQRHMEELWSMLVQLINKNKSLVDELSQARECYEKVIEENMKLREENSKSRKMIGEIGLNRFLSVEADQIWTF.

The tract at residues 30-67 (NLPATSDDSSRTAEDNERKRRRKVSNRESARRSRMRKQ) is disordered. The segment covering 37-47 (DSSRTAEDNER) has biased composition (basic and acidic residues). The 64-residue stretch at 45 to 108 (NERKRRRKVS…EKVIEENMKL (64 aa)) folds into the bZIP domain. The segment at 47 to 68 (RKRRRKVSNRESARRSRMRKQR) is basic motif. Positions 48–55 (KRRRKVSN) match the Nuclear localization signal motif. A leucine-zipper region spans residues 73–87 (LWSMLVQLINKNKSL).

The protein belongs to the bZIP family. Homodimer.

It localises to the nucleus. The chain is Basic leucine zipper 8 from Arabidopsis thaliana (Mouse-ear cress).